The sequence spans 208 residues: 3-demethoxyubiquinol 3-hydroxylase (208 aa).

Residues Glu57, Glu87, His90, Glu139, Glu171, and His174 each contribute to the Fe cation site.

The protein belongs to the COQ7 family. The cofactor is Fe cation.

It localises to the cell membrane. It catalyses the reaction a 5-methoxy-2-methyl-3-(all-trans-polyprenyl)benzene-1,4-diol + AH2 + O2 = a 3-demethylubiquinol + A + H2O. It participates in cofactor biosynthesis; ubiquinone biosynthesis. In terms of biological role, catalyzes the hydroxylation of 2-nonaprenyl-3-methyl-6-methoxy-1,4-benzoquinol during ubiquinone biosynthesis. In Herbaspirillum seropedicae, this protein is 3-demethoxyubiquinol 3-hydroxylase.